The primary structure comprises 292 residues: MTARYIAIDWGSTNLRAWLYQGDHCLESRQSEAGVTRLNGKSPAAVLAEVTTDWREEKTPVVMAGMVGSNVGWKVAPYLSVPACFSSIGEQLTSVGDNIWIIPGLCVSHDDNHNVMRGEETQLIGARALAPSSLYVMPGTHCKWVQADSQQINDFRTVMTGELHHLLLNHSLIGAGLPPQENSADAFTAGLERGLNTPAILPQLFEVRASHVLGTLPREQVSEFLSGLLIGAEVASMRDYVAHQHAITLVAGTSLTARYQQAFQAMGCDVTAVAGDTAFQAGIRSIAHAVAN.

This sequence belongs to the DgoK family.

It catalyses the reaction 2-dehydro-3-deoxy-D-galactonate + ATP = 2-dehydro-3-deoxy-6-phospho-D-galactonate + ADP + H(+). It functions in the pathway carbohydrate acid metabolism; D-galactonate degradation; D-glyceraldehyde 3-phosphate and pyruvate from D-galactonate: step 2/3. This chain is 2-dehydro-3-deoxygalactonokinase (dgoK), found in Escherichia coli (strain K12).